Reading from the N-terminus, the 435-residue chain is MEEKIFSRPAASATVLVGTQFGDEGKGKLVDYLSDKYDIVVRYQGGANAGHTICFDGKTVVLHLIPSGIFNKDCICVIGNGVVIDPNALMDEIKKVEELGYDVKGRLYISHNAHLIMPYHKRLDSLSESCLSGDNKIGTTGRGIGPSYEDKFARKGIRVVDLLDRDVLKEKLRENLAAKNKLISKVYEQEEIDVEAIIREYEEFDKAIDPYVTNTQLFLNRQIKAGKTILLEGAQGCLLDVDHGTYPFVTSSNPTSGGACTGSGVAPNHVGKIIGVCKAYTTRVGNGDFPTELDDETGEALGRIGCEFGATTGRKRRCGWLDLVALRYSVTVSGVTELALTKLDVLDTFEEIKVCTSYMLDGKEIFDFPTEHQTLSRVQPVYKSLKGWMASNAKAKSFAEMHPNAQAYVNFLEEALEVPVTFISVGPGRDETVFK.

Residues 22–28 (GDEGKGK) and 50–52 (GHT) each bind GTP. The Proton acceptor role is filled by Asp-23. Residues Asp-23 and Gly-50 each contribute to the Mg(2+) site. Residues 23–26 (DEGK), 48–51 (NAGH), Thr-140, Arg-154, Gln-235, Thr-250, and Arg-314 contribute to the IMP site. His-51 (proton donor) is an active-site residue. 310–316 (ATTGRKR) lines the substrate pocket. Residues Arg-316, 342–344 (KLD), and 424–426 (SVG) contribute to the GTP site.

It belongs to the adenylosuccinate synthetase family. Homodimer. Requires Mg(2+) as cofactor.

The protein resides in the cytoplasm. It carries out the reaction IMP + L-aspartate + GTP = N(6)-(1,2-dicarboxyethyl)-AMP + GDP + phosphate + 2 H(+). The protein operates within purine metabolism; AMP biosynthesis via de novo pathway; AMP from IMP: step 1/2. Its function is as follows. Plays an important role in the de novo pathway of purine nucleotide biosynthesis. Catalyzes the first committed step in the biosynthesis of AMP from IMP. The protein is Adenylosuccinate synthetase of Chlorobaculum tepidum (strain ATCC 49652 / DSM 12025 / NBRC 103806 / TLS) (Chlorobium tepidum).